The primary structure comprises 560 residues: MQQHYDYIIVGAGSAGCVLADRLSESGDHSVLLLEAGGSDKSIFIQMPTALSYPMNSEKYAWQFETDAEADLDGRRLHCPRGKVLGGSSSINGMVYVRGHACDFDEWEEQGAKGWNYQACLPYFRRAENWIDGEDEYRGGDGPLSTCAGNKMTLNPLYRAFIDAGKEAGYPETSDYNGYQQEGFGPMHMTVKNGVRASTSNAYLSRAKKRSNFKLIKGVVVQRILLEEKRAVGVEFELAGELRTCFAKNEVISSAGSIGSVQLLQLSGIGPKTVLEKAGVTPVYHLPGVGQNLQDHLEVYFQYHCQKPITLNGKLDWFSKGLIGTEWILTRKGLGATNHFESCAFIRSRAGLKWPNIQYHFLPAAMRYDGQAAFDGHGFQVHVGPNKPESRGRVEIVSANPLDKPKIQFNYLSTERDRQDWRDCIRLTREILAQPAMDEFRGEEIQPGINVATDAEIDQWVKENVESAYHPSCSCKMGADDDPMAVLDEECRVRGITNLRVVDSSVFPTIPNGNLNAPTIMVAERAADLILHKQPLPPQRSKVWLAPSWETQQRTGEPMR.

6–35 (DYIIVGAGSAGCVLADRLSESGDHSVLLLE) provides a ligand contact to FAD. The active-site Proton acceptor is His470.

This sequence belongs to the GMC oxidoreductase family. Requires FAD as cofactor.

The enzyme catalyses choline + A = betaine aldehyde + AH2. The catalysed reaction is betaine aldehyde + NAD(+) + H2O = glycine betaine + NADH + 2 H(+). It functions in the pathway amine and polyamine biosynthesis; betaine biosynthesis via choline pathway; betaine aldehyde from choline (cytochrome c reductase route): step 1/1. Functionally, involved in the biosynthesis of the osmoprotectant glycine betaine. Catalyzes the oxidation of choline to betaine aldehyde and betaine aldehyde to glycine betaine at the same rate. The protein is Oxygen-dependent choline dehydrogenase of Vibrio vulnificus (strain YJ016).